Consider the following 136-residue polypeptide: Large ribosomal subunit protein uL16 (136 aa).

The protein belongs to the universal ribosomal protein uL16 family. As to quaternary structure, part of the 50S ribosomal subunit.

Functionally, binds 23S rRNA and is also seen to make contacts with the A and possibly P site tRNAs. This is Large ribosomal subunit protein uL16 from Alteromonas mediterranea (strain DSM 17117 / CIP 110805 / LMG 28347 / Deep ecotype).